The primary structure comprises 269 residues: MNMKEISKVVDLVRESNPLVHNITNVVVTNFTANGLLALGASPVMAYAKEEVAEMASIAGALVLNMGTLRPEEVEAMLLAGKSANKNDVPVLFDPVGAGATSYRTEVARYIPAEIDLAVIRGNAAEIANVINEKWEIKGVDAGTGNGNVVNIAKQAADELNTVAVITGQEDVVTDGERTILIRNGHPILTKVTGTGCLLTSVIGAFVAVEKDYVKAAVAALTFYGVAAEIAASKTVENGPGSFQIEFLNQLANTTSDDIEKYGKIEVIQ.

M45 provides a ligand contact to substrate. Residues R121 and T167 each contribute to the ATP site. G194 is a binding site for substrate.

This sequence belongs to the Thz kinase family. It depends on Mg(2+) as a cofactor.

It carries out the reaction 5-(2-hydroxyethyl)-4-methylthiazole + ATP = 4-methyl-5-(2-phosphooxyethyl)-thiazole + ADP + H(+). It functions in the pathway cofactor biosynthesis; thiamine diphosphate biosynthesis; 4-methyl-5-(2-phosphoethyl)-thiazole from 5-(2-hydroxyethyl)-4-methylthiazole: step 1/1. Functionally, catalyzes the phosphorylation of the hydroxyl group of 4-methyl-5-beta-hydroxyethylthiazole (THZ). The polypeptide is Hydroxyethylthiazole kinase (Bacillus mycoides (strain KBAB4) (Bacillus weihenstephanensis)).